The chain runs to 298 residues: Cyanophycinase (298 aa).

Active-site charge relay system residues include serine 155, glutamate 173, and histidine 197.

This sequence belongs to the peptidase S51 family.

It catalyses the reaction [L-4-(L-arginin-2-N-yl)aspartate](n) + H2O = [L-4-(L-arginin-2-N-yl)aspartate](n-1) + L-4-(L-arginin-2-N-yl)aspartate. Exopeptidase that catalyzes the hydrolytic cleavage of multi-L-arginyl-poly-L-aspartic acid (cyanophycin; a water-insoluble reserve polymer) into aspartate-arginine dipeptides. In Trichormus variabilis (strain ATCC 29413 / PCC 7937) (Anabaena variabilis), this protein is Cyanophycinase (cphB).